The chain runs to 568 residues: MPYRMSRQAYAETYGPTVGDRIRLADTELFIQVEQDFTTYGDEVKFGGGKVIRDGMGQSPIANADGAVDLVITNALILDWWGIVKADIGIKDGKIFKIGKAGNPYIQDHVDIIIGPGTEALAGEGMILTAGGIDTHIHFICPQQIEVAIASGITTMIGGGTGPATGTNATTCTPGPWNMYRMLQAADAFPMNLGFLGKGNASQPQGLVEQIFAGAIGLKLHEDWGTTPATIDTCLTVADEYDVQVAIHTDTLNEAGFVEDTIAAFKNRAIHTYHTEGAGGGHAPDIIKVCGQANVLPSSTNPTRPYTVNTLDEHLDMLMVCHHLDPAIAEDVAFAESRIRRETIAAEDILHDLGAFSMIASDSQAMGRVGEVIIRTWQTSHKMKVQRGSLTGDAEADNLRAKRYVAKYTINPAITHGIAQYVGSVEAGKLADLCLWRPAFFGVKPEIVIKGGMIAWSQMGDANASIPTPQPVHMRPMFGSFAGARNATSLTFVSQAALEREIPQQLGLRKSAVAVSGTRQLTKQDMKLNDALPHIEVDSESYEVRADGELLTCEPATVLPMAQRYFLF.

Positions 131 to 568 (GGIDTHIHFI…LPMAQRYFLF (438 aa)) constitute a Urease domain. Positions 136, 138, and 219 each coordinate Ni(2+). The residue at position 219 (lysine 219) is an N6-carboxylysine. Histidine 221 contributes to the substrate binding site. Ni(2+)-binding residues include histidine 248 and histidine 274. The active-site Proton donor is histidine 322. Aspartate 362 serves as a coordination point for Ni(2+).

The protein belongs to the metallo-dependent hydrolases superfamily. Urease alpha subunit family. Heterotrimer of UreA (gamma), UreB (beta) and UreC (alpha) subunits. Three heterotrimers associate to form the active enzyme. Requires Ni cation as cofactor. In terms of processing, carboxylation allows a single lysine to coordinate two nickel ions.

The protein resides in the cytoplasm. The catalysed reaction is urea + 2 H2O + H(+) = hydrogencarbonate + 2 NH4(+). It participates in nitrogen metabolism; urea degradation; CO(2) and NH(3) from urea (urease route): step 1/1. The protein is Urease subunit alpha of Nostoc sp. (strain PCC 7120 / SAG 25.82 / UTEX 2576).